Here is a 200-residue protein sequence, read N- to C-terminus: LHFPL tetraspan subfamily member 7 protein (200 aa).

4 consecutive transmembrane segments (helical) span residues valine 5–phenylalanine 27, valine 68–leucine 88, alanine 113–isoleucine 133, and leucine 150–isoleucine 170.

The protein belongs to the TMEM211 family.

The protein resides in the membrane. This Homo sapiens (Human) protein is LHFPL tetraspan subfamily member 7 protein.